The chain runs to 363 residues: Ribosomal RNA large subunit methyltransferase M (363 aa).

S-adenosyl-L-methionine-binding positions include Ser194, 227–230, Asp246, Asp266, and Asp284; that span reads CPGG. Residue Lys313 is the Proton acceptor of the active site.

Belongs to the class I-like SAM-binding methyltransferase superfamily. RNA methyltransferase RlmE family. RlmM subfamily. In terms of assembly, monomer.

It is found in the cytoplasm. The catalysed reaction is cytidine(2498) in 23S rRNA + S-adenosyl-L-methionine = 2'-O-methylcytidine(2498) in 23S rRNA + S-adenosyl-L-homocysteine + H(+). Catalyzes the 2'-O-methylation at nucleotide C2498 in 23S rRNA. The chain is Ribosomal RNA large subunit methyltransferase M from Haemophilus influenzae (strain ATCC 51907 / DSM 11121 / KW20 / Rd).